The primary structure comprises 232 residues: Cilia- and flagella-associated protein 95 (232 aa).

Residues Met1 to Lys96 are Extracellular-facing. A glycan (N-linked (GlcNAc...) asparagine) is linked at Asn75. A helical transmembrane segment spans residues Met97–Leu115. The Cytoplasmic portion of the chain corresponds to Asn116 to Lys232. Residues Leu153–Pro163 are mn.

As to quaternary structure, microtubule inner protein component of sperm flagellar doublet microtubules. Interacts with MYH9. Interacts with MYH10. As to expression, expressed in trachea multiciliated cells.

It is found in the cytoplasm. The protein localises to the cytoskeleton. The protein resides in the cilium axoneme. Its subcellular location is the flagellum axoneme. It localises to the cell membrane. In terms of biological role, microtubule inner protein (MIP) part of the dynein-decorated doublet microtubules (DMTs) in cilia axoneme, which is required for motile cilia beating. In Bos taurus (Bovine), this protein is Cilia- and flagella-associated protein 95.